The following is a 151-amino-acid chain: Cell division protein SepF (151 aa).

This sequence belongs to the SepF family. As to quaternary structure, homodimer. Interacts with FtsZ.

It localises to the cytoplasm. Its function is as follows. Cell division protein that is part of the divisome complex and is recruited early to the Z-ring. Probably stimulates Z-ring formation, perhaps through the cross-linking of FtsZ protofilaments. Its function overlaps with FtsA. The sequence is that of Cell division protein SepF from Desulfitobacterium hafniense (strain Y51).